The chain runs to 69 residues: uncharacterized protein (69 aa).

The protein resides in the mitochondrion. This is an uncharacterized protein from Marchantia polymorpha (Common liverwort).